A 314-amino-acid polypeptide reads, in one-letter code: Taste receptor type 2 member 42 (314 aa).

Residues Met-1 to Lys-7 lie on the Extracellular side of the membrane. A helical transmembrane segment spans residues Ile-8–Gly-28. The Cytoplasmic segment spans residues Leu-29–Cys-50. Residues Leu-51–Leu-71 form a helical membrane-spanning segment. The Extracellular portion of the chain corresponds to Ala-72–Thr-101. A helical transmembrane segment spans residues Cys-102–Leu-122. The Cytoplasmic portion of the chain corresponds to Arg-123–Asn-127. Residues Arg-128 to Leu-148 form a helical membrane-spanning segment. Over Glu-149–Leu-187 the chain is Extracellular. A glycan (N-linked (GlcNAc...) asparagine) is linked at Asn-163. A helical membrane pass occupies residues Asn-188–Val-208. Residues Arg-209–Ser-238 are Cytoplasmic-facing. Residues Phe-239–Ile-259 traverse the membrane as a helical segment. Topologically, residues Leu-260–Tyr-265 are extracellular. The chain crosses the membrane as a helical span at residues Thr-266–Leu-286. At Gly-287–Leu-314 the chain is on the cytoplasmic side.

Belongs to the G-protein coupled receptor T2R family.

The protein localises to the membrane. Its function is as follows. Receptor that may play a role in the perception of bitterness and is gustducin-linked. May play a role in sensing the chemical composition of the gastrointestinal content. The activity of this receptor may stimulate alpha gustducin, mediate PLC-beta-2 activation and lead to the gating of TRPM5. This Papio hamadryas (Hamadryas baboon) protein is Taste receptor type 2 member 42 (TAS2R42).